A 201-amino-acid polypeptide reads, in one-letter code: Recombination protein RecR (201 aa).

The segment at 60 to 75 (CQVCGNVDVRDPCTVC) adopts a C4-type zinc-finger fold. One can recognise a Toprim domain in the interval 83-178 (SVLVVVAEVA…KVTRLAHGVP (96 aa)).

It belongs to the RecR family.

Functionally, may play a role in DNA repair. It seems to be involved in an RecBC-independent recombinational process of DNA repair. It may act with RecF and RecO. This is Recombination protein RecR from Azorhizobium caulinodans (strain ATCC 43989 / DSM 5975 / JCM 20966 / LMG 6465 / NBRC 14845 / NCIMB 13405 / ORS 571).